A 184-amino-acid chain; its full sequence is PLASMODESMATA CALLOSE-BINDING PROTEIN 3 (184 aa).

A signal peptide spans 1–19; the sequence is MAVFVLVMILLAMAGHSSG. Residues Cys22 and Cys84 are joined by a disulfide bond. Residues 109-146 form a disordered region; the sequence is SGSGTTTPVTTTPSTRVPTTTNTRPYTITPSTGGGLGI. Low complexity predominate over residues 113–139; that stretch reads TTTPVTTTPSTRVPTTTNTRPYTITPS. Ser158 carries GPI-anchor amidated serine lipidation. Residues 159–184 constitute a propeptide, removed in mature form; that stretch reads FGFKLQSPRFGFIVLFTLFLPFYLFS.

Post-translationally, contains two additional disulfide bonds. In terms of tissue distribution, expressed in the shoot apical region and in young leaves but also detected in the laminar and vasculature of mature leaves.

The protein resides in the cell membrane. It is found in the cell junction. Its subcellular location is the plasmodesma. This Arabidopsis thaliana (Mouse-ear cress) protein is PLASMODESMATA CALLOSE-BINDING PROTEIN 3 (PDCB3).